A 291-amino-acid chain; its full sequence is Phosphatidylglycerol--prolipoprotein diacylglyceryl transferase (291 aa).

A run of 7 helical transmembrane segments spans residues 21–41 (VALH…MWLA), 60–80 (LLYA…VLFY), 96–116 (WDGG…MIIF), 130–150 (FIAP…FING), 198–218 (SQLY…NLFI), 225–245 (GAVS…VEFF), and 260–280 (ISMG…MMVW). An a 1,2-diacyl-sn-glycero-3-phospho-(1'-sn-glycerol)-binding site is contributed by arginine 143.

The protein belongs to the Lgt family.

It is found in the cell inner membrane. The enzyme catalyses L-cysteinyl-[prolipoprotein] + a 1,2-diacyl-sn-glycero-3-phospho-(1'-sn-glycerol) = an S-1,2-diacyl-sn-glyceryl-L-cysteinyl-[prolipoprotein] + sn-glycerol 1-phosphate + H(+). It participates in protein modification; lipoprotein biosynthesis (diacylglyceryl transfer). In terms of biological role, catalyzes the transfer of the diacylglyceryl group from phosphatidylglycerol to the sulfhydryl group of the N-terminal cysteine of a prolipoprotein, the first step in the formation of mature lipoproteins. The protein is Phosphatidylglycerol--prolipoprotein diacylglyceryl transferase of Salmonella agona (strain SL483).